Here is a 242-residue protein sequence, read N- to C-terminus: ATP synthase subunit a (242 aa).

5 helical membrane passes run 21-41, 79-99, 116-136, 173-193, and 198-218; these read LSSIMMLIITAVIVFVIAIIC, FHFLAVTLIFFIFVSNMLGLP, DATVTLTLSTLIILLTHFYGV, LYGNIFAGELLLGLLAGLVTG, and AWGWIIGLPGLVVWQGFSIFI.

The protein belongs to the ATPase A chain family. F-type ATPases have 2 components, CF(1) - the catalytic core - and CF(0) - the membrane proton channel. CF(1) has five subunits: alpha(3), beta(3), gamma(1), delta(1), epsilon(1). CF(0) has three main subunits: a(1), b(2) and c(9-12). The alpha and beta chains form an alternating ring which encloses part of the gamma chain. CF(1) is attached to CF(0) by a central stalk formed by the gamma and epsilon chains, while a peripheral stalk is formed by the delta and b chains.

It is found in the cell membrane. Key component of the proton channel; it plays a direct role in the translocation of protons across the membrane. This Staphylococcus saprophyticus subsp. saprophyticus (strain ATCC 15305 / DSM 20229 / NCIMB 8711 / NCTC 7292 / S-41) protein is ATP synthase subunit a.